The chain runs to 343 residues: Thromboxane A2 receptor (343 aa).

Over 1–29 (MWPNASSLGPCFRPMNITLEERRLIASPW) the chain is Extracellular. N-linked (GlcNAc...) asparagine glycans are attached at residues Asn-4 and Asn-16. A helical membrane pass occupies residues 30–52 (FAASFCLVGLASNLLALSVLMGA). Topologically, residues 53–66 (RQGSSQSRSSFLTF) are cytoplasmic. The chain crosses the membrane as a helical span at residues 67–87 (LCGLVLTDFMGLLVTGAIVVT). Topologically, residues 88–106 (QHFVLFEWQAVDPGCSLCH) are extracellular. Cys-105 and Cys-183 are joined by a disulfide. A helical transmembrane segment spans residues 107 to 128 (FMGVIMVFFGLCPLLLGAAMAS). Residues 129-149 (ERFLGITRPFSRPATASQRRA) are Cytoplasmic-facing. Residues 150-172 (WTTVGLVWASALALGLLPLLGVG) traverse the membrane as a helical segment. Over 173–193 (HYTVQYPGSWCFLTLGTDPGD) the chain is Extracellular. A helical membrane pass occupies residues 194 to 219 (VAFGLLFALLGSISVGMSFLLNTISV). The Cytoplasmic segment spans residues 220–246 (ATLCHVYHGQATAQQRPRDCEVEMMVQ). The chain crosses the membrane as a helical span at residues 247–270 (LMGIMVVASICWMPLLVFIAQTVL). Over 271 to 289 (QSPPAMSPTGQLSRLTERQ) the chain is Extracellular. Residues 290 to 311 (LLIYLRVATWNQILDPWVYILF) traverse the membrane as a helical segment. At 312–343 (RRAVIQRFYPRLSTRSRSLSLQPQLTRRSTIH) the chain is on the cytoplasmic side. A phosphoserine mark is found at Ser-329 and Ser-331.

This sequence belongs to the G-protein coupled receptor 1 family. Interacts with RPGRIP1L. Interacts with RACK1; the interaction regulates TBXA2R cell surface expression.

The protein localises to the cell membrane. In terms of biological role, receptor for thromboxane A2 (TXA2), a potent stimulator of platelet aggregation. The activity of this receptor is mediated by a G-protein that activates a phosphatidylinositol-calcium second messenger system. In the kidney, the binding of TXA2 to glomerular TP receptors causes intense vasoconstriction. Activates phospholipase C and adenylyl cyclase. In Bos taurus (Bovine), this protein is Thromboxane A2 receptor (TBXA2R).